Here is a 442-residue protein sequence, read N- to C-terminus: Histidinol dehydrogenase (442 aa).

Positions 138, 196, and 219 each coordinate NAD(+). 3 residues coordinate substrate: Ser-245, Gln-267, and His-270. Positions 267 and 270 each coordinate Zn(2+). Residues Glu-334 and His-335 each act as proton acceptor in the active site. Substrate is bound by residues His-335, Asp-368, Glu-422, and His-427. Zn(2+) is bound at residue Asp-368. His-427 serves as a coordination point for Zn(2+).

This sequence belongs to the histidinol dehydrogenase family. Homodimer. Zn(2+) serves as cofactor.

It carries out the reaction L-histidinol + 2 NAD(+) + H2O = L-histidine + 2 NADH + 3 H(+). The protein operates within amino-acid biosynthesis; L-histidine biosynthesis; L-histidine from 5-phospho-alpha-D-ribose 1-diphosphate: step 9/9. Catalyzes the sequential NAD-dependent oxidations of L-histidinol to L-histidinaldehyde and then to L-histidine. The chain is Histidinol dehydrogenase from Pectobacterium atrosepticum (strain SCRI 1043 / ATCC BAA-672) (Erwinia carotovora subsp. atroseptica).